The following is a 173-amino-acid chain: Small ribosomal subunit protein mS25 (173 aa).

It belongs to the mitochondrion-specific ribosomal protein mS25 family. Component of the mitochondrial ribosome small subunit (28S) which comprises a 12S rRNA and about 30 distinct proteins.

The protein resides in the mitochondrion. The protein is Small ribosomal subunit protein mS25 (MRPS25) of Bos taurus (Bovine).